Reading from the N-terminus, the 102-residue chain is Large ribosomal subunit protein bL21 (102 aa).

The protein belongs to the bacterial ribosomal protein bL21 family. Part of the 50S ribosomal subunit. Contacts protein L20.

This protein binds to 23S rRNA in the presence of protein L20. This is Large ribosomal subunit protein bL21 from Ehrlichia ruminantium (strain Gardel).